Consider the following 150-residue polypeptide: 3-dehydroquinate dehydratase (150 aa).

Residue Tyr26 is the Proton acceptor of the active site. 3 residues coordinate substrate: Asn77, His83, and Asp90. Residue His103 is the Proton donor of the active site. Substrate is bound by residues 104–105 (LS) and Arg114.

This sequence belongs to the type-II 3-dehydroquinase family. Homododecamer.

It catalyses the reaction 3-dehydroquinate = 3-dehydroshikimate + H2O. It participates in metabolic intermediate biosynthesis; chorismate biosynthesis; chorismate from D-erythrose 4-phosphate and phosphoenolpyruvate: step 3/7. In terms of biological role, catalyzes a trans-dehydration via an enolate intermediate. The chain is 3-dehydroquinate dehydratase from Enterobacter sp. (strain 638).